Consider the following 297-residue polypeptide: Bifunctional protein FolD (297 aa).

NADP(+)-binding positions include 169 to 171, Ser-196, and Ile-237; that span reads GRS.

This sequence belongs to the tetrahydrofolate dehydrogenase/cyclohydrolase family. As to quaternary structure, homodimer.

It catalyses the reaction (6R)-5,10-methylene-5,6,7,8-tetrahydrofolate + NADP(+) = (6R)-5,10-methenyltetrahydrofolate + NADPH. The enzyme catalyses (6R)-5,10-methenyltetrahydrofolate + H2O = (6R)-10-formyltetrahydrofolate + H(+). It functions in the pathway one-carbon metabolism; tetrahydrofolate interconversion. In terms of biological role, catalyzes the oxidation of 5,10-methylenetetrahydrofolate to 5,10-methenyltetrahydrofolate and then the hydrolysis of 5,10-methenyltetrahydrofolate to 10-formyltetrahydrofolate. The protein is Bifunctional protein FolD of Salinibacter ruber (strain DSM 13855 / M31).